Here is a 337-residue protein sequence, read N- to C-terminus: Quinolinate synthase (337 aa).

His38 and Ser59 together coordinate iminosuccinate. A [4Fe-4S] cluster-binding site is contributed by Cys104. Residues 130–132 (YAN) and Ser147 contribute to the iminosuccinate site. Cys191 serves as a coordination point for [4Fe-4S] cluster. Residues 217 to 219 (HPE) and Thr234 contribute to the iminosuccinate site. Cys288 contributes to the [4Fe-4S] cluster binding site.

The protein belongs to the quinolinate synthase family. Type 1 subfamily. The cofactor is [4Fe-4S] cluster.

The protein localises to the cytoplasm. It catalyses the reaction iminosuccinate + dihydroxyacetone phosphate = quinolinate + phosphate + 2 H2O + H(+). Its pathway is cofactor biosynthesis; NAD(+) biosynthesis; quinolinate from iminoaspartate: step 1/1. In terms of biological role, catalyzes the condensation of iminoaspartate with dihydroxyacetone phosphate to form quinolinate. The protein is Quinolinate synthase of Wigglesworthia glossinidia brevipalpis.